The following is a 428-amino-acid chain: Putative POM121-like protein 1 (428 aa).

Disordered stretches follow at residues 1–23 (MDSL…RLSP), 36–204 (KESG…KFPL), 254–293 (DCRP…HKSQ), 306–384 (TEVP…PSTL), and 402–428 (GPQP…SCPK). Residues 44 to 62 (EQDKDPRVQENPGDQRRVP) show a composition bias toward basic and acidic residues. Positions 106 to 117 (QTSQTSWTSSCT) are enriched in low complexity. Polar residues-rich tracts occupy residues 118-129 (NRNAISSSYSST), 144-155 (SHCQLTLSSSKT), 260-269 (PSHTLSSLAT), 326-347 (FSSS…QVTS), and 403-415 (PQPQ…RGQN). Low complexity predominate over residues 416–428 (QRSQTSRTSSCPK).

This sequence belongs to the POM121 family.

The polypeptide is Putative POM121-like protein 1 (POM121L1P) (Homo sapiens (Human)).